The sequence spans 353 residues: Chloroplastic lipocalin (353 aa).

Over residues 1–18 (MILLSSSISLSRPVSSQS) the composition is skewed to low complexity. A disordered region spans residues 1–27 (MILLSSSISLSRPVSSQSFSPPAATST). The transit peptide at 1 to 39 (MILLSSSISLSRPVSSQSFSPPAATSTRRSHSSVTVKCC) directs the protein to the chloroplast. Cys163 and Cys299 are joined by a disulfide.

This sequence belongs to the calycin superfamily. Lipocalin family. As to expression, expressed in leaves at low levels (at protein levels). Present in seeds.

It localises to the plastid. The protein localises to the chloroplast thylakoid lumen. Lipocalin that prevents thylakoidal membrane lipids peroxidation and confers protection against oxidative stress, especially mediated by singlet oxygen in response to high light and other stress (e.g. heat shocks). Required for seed longevity by ensuring polyunsaturated lipids integrity. The protein is Chloroplastic lipocalin of Arabidopsis thaliana (Mouse-ear cress).